The sequence spans 455 residues: Probable glycine dehydrogenase (decarboxylating) subunit 1 (455 aa).

The protein belongs to the GcvP family. N-terminal subunit subfamily. The glycine cleavage system is composed of four proteins: P, T, L and H. In this organism, the P 'protein' is a heterodimer of two subunits.

It carries out the reaction N(6)-[(R)-lipoyl]-L-lysyl-[glycine-cleavage complex H protein] + glycine + H(+) = N(6)-[(R)-S(8)-aminomethyldihydrolipoyl]-L-lysyl-[glycine-cleavage complex H protein] + CO2. In terms of biological role, the glycine cleavage system catalyzes the degradation of glycine. The P protein binds the alpha-amino group of glycine through its pyridoxal phosphate cofactor; CO(2) is released and the remaining methylamine moiety is then transferred to the lipoamide cofactor of the H protein. In Saccharolobus solfataricus (strain ATCC 35092 / DSM 1617 / JCM 11322 / P2) (Sulfolobus solfataricus), this protein is Probable glycine dehydrogenase (decarboxylating) subunit 1.